The sequence spans 432 residues: Glutamyl-tRNA reductase (432 aa).

Substrate is bound by residues 49–52, serine 107, 112–114, and glutamine 118; these read TCNR and ETQ. The active-site Nucleophile is cysteine 50. 186 to 191 is a binding site for NADP(+); that stretch reads GAGEMG.

This sequence belongs to the glutamyl-tRNA reductase family. As to quaternary structure, homodimer.

The enzyme catalyses (S)-4-amino-5-oxopentanoate + tRNA(Glu) + NADP(+) = L-glutamyl-tRNA(Glu) + NADPH + H(+). The protein operates within porphyrin-containing compound metabolism; protoporphyrin-IX biosynthesis; 5-aminolevulinate from L-glutamyl-tRNA(Glu): step 1/2. Functionally, catalyzes the NADPH-dependent reduction of glutamyl-tRNA(Glu) to glutamate 1-semialdehyde (GSA). This is Glutamyl-tRNA reductase from Campylobacter jejuni subsp. jejuni serotype O:6 (strain 81116 / NCTC 11828).